We begin with the raw amino-acid sequence, 1060 residues long: Carbamoyl phosphate synthase large chain (1060 aa).

Residues 1 to 401 (MPKRQDIHKI…SLLKAVRSLE (401 aa)) are carboxyphosphate synthetic domain. Positions 129, 169, 175, 176, 208, 210, 215, 241, 242, 243, 284, and 298 each coordinate ATP. Positions 133–327 (KNLMQKLHEP…IAKMAAKIAV (195 aa)) constitute an ATP-grasp 1 domain. Residues Gln-284, Glu-298, and Asn-300 each coordinate Mg(2+). Gln-284, Glu-298, and Asn-300 together coordinate Mn(2+). An oligomerization domain region spans residues 402 to 546 (VGLIHPERPA…YSTYESSTES (145 aa)). The segment at 547 to 929 (VKSDKPSVLV…ALYKAFEAAG (383 aa)) is carbamoyl phosphate synthetic domain. One can recognise an ATP-grasp 2 domain in the interval 671–861 (DQVIKSLKLP…LAQVATLAIL (191 aa)). ATP contacts are provided by Arg-707, His-746, Leu-748, Glu-752, Gly-777, Ile-778, His-779, Ser-780, Gln-820, and Glu-832. Mg(2+) is bound by residues Gln-820, Glu-832, and Asn-834. Residues Gln-820, Glu-832, and Asn-834 each contribute to the Mn(2+) site. The 131-residue stretch at 930–1060 (MHLPQFGRAL…QAFSISPIKS (131 aa)) folds into the MGS-like domain. Residues 930–1060 (MHLPQFGRAL…QAFSISPIKS (131 aa)) form an allosteric domain region.

The protein belongs to the CarB family. Composed of two chains; the small (or glutamine) chain promotes the hydrolysis of glutamine to ammonia, which is used by the large (or ammonia) chain to synthesize carbamoyl phosphate. Tetramer of heterodimers (alpha,beta)4. Mg(2+) is required as a cofactor. It depends on Mn(2+) as a cofactor.

It catalyses the reaction hydrogencarbonate + L-glutamine + 2 ATP + H2O = carbamoyl phosphate + L-glutamate + 2 ADP + phosphate + 2 H(+). It carries out the reaction hydrogencarbonate + NH4(+) + 2 ATP = carbamoyl phosphate + 2 ADP + phosphate + 2 H(+). The protein operates within amino-acid biosynthesis; L-arginine biosynthesis; carbamoyl phosphate from bicarbonate: step 1/1. It functions in the pathway pyrimidine metabolism; UMP biosynthesis via de novo pathway; (S)-dihydroorotate from bicarbonate: step 1/3. Its function is as follows. Large subunit of the glutamine-dependent carbamoyl phosphate synthetase (CPSase). CPSase catalyzes the formation of carbamoyl phosphate from the ammonia moiety of glutamine, carbonate, and phosphate donated by ATP, constituting the first step of 2 biosynthetic pathways, one leading to arginine and/or urea and the other to pyrimidine nucleotides. The large subunit (synthetase) binds the substrates ammonia (free or transferred from glutamine from the small subunit), hydrogencarbonate and ATP and carries out an ATP-coupled ligase reaction, activating hydrogencarbonate by forming carboxy phosphate which reacts with ammonia to form carbamoyl phosphate. The sequence is that of Carbamoyl phosphate synthase large chain from Lacticaseibacillus casei (strain BL23) (Lactobacillus casei).